Consider the following 546-residue polypeptide: Serine/threonine-protein kinase Chk2 (546 aa).

Residues 1-70 (MKSHHQSHSS…SSHSSSGTLS (70 aa)) form a disordered region. The span at 8–70 (HSSTSSKAHD…SSHSSSGTLS (63 aa)) shows a compositional bias: low complexity. Position 68 is a phosphothreonine; by MAP3K20 (threonine 68). Serine 71 bears the Phosphoserine; by PLK3 mark. Phosphothreonine; by ATM and MAP3K20 is present on threonine 77. Serine 82 is subject to Phosphoserine; by PLK3. An FHA domain is found at 117–179 (YWFGRDKSCE…NGTFVNTELI (63 aa)). Residues 224–490 (YIMSKTLGSG…TEEALNHPWL (267 aa)) enclose the Protein kinase domain. ATP is bound by residues 231–238 (GSGACGEV), lysine 253, and 306–312 (ELMEGGE). Aspartate 351 acts as the Proton acceptor in catalysis. ATP is bound by residues 355 to 356 (EN) and aspartate 372. The segment at 372 to 398 (DFGQSKILGETSLMRTLCGTPTYLAPE) is T-loop/activation segment. Serine 383 is modified (phosphoserine; by autocatalysis). Phosphothreonine; by autocatalysis is present on residues threonine 387 and threonine 391. Serine 460 bears the Phosphoserine mark.

Belongs to the protein kinase superfamily. CAMK Ser/Thr protein kinase family. CHK2 subfamily. In terms of assembly, homodimer. Homodimerization is part of the activation process but the dimer may dissociate following activation. Interacts with PML. Interacts with TP53. Interacts with RB1; phosphorylates RB1. Interacts with BRCA1. Interacts (phosphorylated at Thr-68) with MDC1; requires ATM-mediated phosphorylation of CHEK2. Interacts with TP53BP1; modulates CHEK2 phosphorylation at Thr-68 in response to ionizing radiation. Interacts with CDC25A; phosphorylates CDC25A and mediates its degradation in response to ionizing radiation. Interacts with CUL1; mediates CHEK2 ubiquitination and regulation. Interacts with CDKN2AIP. Interacts (via protein kinase domain) with CCAR2 (via N-terminus). Interacts with SIRT1. Mg(2+) is required as a cofactor. In terms of processing, phosphorylated. Phosphorylated at Ser-82 by PLK3 in response to DNA damage, promoting phosphorylation at Thr-77 by ATM and the G2/M transition checkpoint. Phosphorylation at Thr-77 induces homodimerization. Autophosphorylates at Thr-387 and Thr-391 in the T-loop/activation segment upon dimerization to become fully active. DNA damage-induced autophosphorylation at Ser-383 induces CUL1-mediated ubiquitination and regulates the pro-apoptotic function. Phosphorylation at Ser-460 also regulates ubiquitination. Phosphorylated by PLK4. Ubiquitinated. CUL1-mediated ubiquitination regulates the pro-apoptotic function. Ubiquitination may also regulate protein stability. Ubiquitinated by RNF8 via 'Lys-48'-linked ubiquitination. In terms of tissue distribution, ubiquitously expressed with higher levels in the thymus, spleen and colon (at protein level).

The protein localises to the nucleus. It localises to the PML body. It is found in the nucleoplasm. It carries out the reaction L-seryl-[protein] + ATP = O-phospho-L-seryl-[protein] + ADP + H(+). It catalyses the reaction L-threonyl-[protein] + ATP = O-phospho-L-threonyl-[protein] + ADP + H(+). With respect to regulation, activated through phosphorylation at Thr-68 by ATM in response to DNA double-strand breaks. Activation is modulated by several mediators including MDC1 and TP53BP1. Induces homodimerization with exchange of the T-loop/activation segment between protomers and transphosphorylation of the protomers. The autophosphorylated kinase dimer is fully active. Negatively regulated by PPM1D through dephosphorylation of Thr-68. Its function is as follows. Serine/threonine-protein kinase which is required for checkpoint-mediated cell cycle arrest, activation of DNA repair and apoptosis in response to the presence of DNA double-strand breaks. May also negatively regulate cell cycle progression during unperturbed cell cycles. Following activation, phosphorylates numerous effectors preferentially at the consensus sequence [L-X-R-X-X-S/T]. Regulates cell cycle checkpoint arrest through phosphorylation of CDC25A, CDC25B and CDC25C, inhibiting their activity. Inhibition of CDC25 phosphatase activity leads to increased inhibitory tyrosine phosphorylation of CDK-cyclin complexes and blocks cell cycle progression. May also phosphorylate NEK6 which is involved in G2/M cell cycle arrest. Regulates DNA repair through phosphorylation of BRCA2, enhancing the association of RAD51 with chromatin which promotes DNA repair by homologous recombination. Also stimulates the transcription of genes involved in DNA repair (including BRCA2) through the phosphorylation and activation of the transcription factor FOXM1. Regulates apoptosis through the phosphorylation of p53/TP53, MDM4 and PML. Phosphorylation of p53/TP53 at 'Ser-20' by CHEK2 may alleviate inhibition by MDM2, leading to accumulation of active p53/TP53. Phosphorylation of MDM4 may also reduce degradation of p53/TP53. Also controls the transcription of pro-apoptotic genes through phosphorylation of the transcription factor E2F1. Tumor suppressor, it may also have a DNA damage-independent function in mitotic spindle assembly by phosphorylating BRCA1. Its absence may be a cause of the chromosomal instability observed in some cancer cells. Promotes the CCAR2-SIRT1 association and is required for CCAR2-mediated SIRT1 inhibition. Under oxidative stress, promotes ATG7 ubiquitination by phosphorylating the E3 ubiquitin ligase TRIM32 at 'Ser-56' leading to positive regulation of the autophagosme assembly. The sequence is that of Serine/threonine-protein kinase Chk2 from Mus musculus (Mouse).